Here is a 61-residue protein sequence, read N- to C-terminus: Small ribosomal subunit protein uS14 (61 aa).

Zn(2+) contacts are provided by cysteine 24, cysteine 27, cysteine 40, and cysteine 43.

The protein belongs to the universal ribosomal protein uS14 family. Zinc-binding uS14 subfamily. In terms of assembly, part of the 30S ribosomal subunit. Contacts proteins S3 and S10. It depends on Zn(2+) as a cofactor.

In terms of biological role, binds 16S rRNA, required for the assembly of 30S particles and may also be responsible for determining the conformation of the 16S rRNA at the A site. In Thermus aquaticus, this protein is Small ribosomal subunit protein uS14.